Consider the following 512-residue polypeptide: 3-ketoacyl-CoA synthase 9 (512 aa).

A run of 2 helical transmembrane segments spans residues 44-64 (LITHLFKLCLVPLMAVLVTEI) and 83-103 (LVAFIFLSALAIFGSTVYIMS). The FAE domain occupies 100–389 (YIMSRPRSVY…FFMTLVTKKL (290 aa)). Residues Cys-244, His-323, His-407, His-411, His-440, and Asn-444 contribute to the active site.

This sequence belongs to the thiolase-like superfamily. Chalcone/stilbene synthases family. As to expression, expressed in seedlings, stems, leaves, flowers and siliques. Expressed in roots, leaves, and stems, including epidermis, silique walls, sepals, the upper portion of the styles, and seed coats, but not in developing embryos.

It localises to the endoplasmic reticulum membrane. It carries out the reaction a very-long-chain acyl-CoA + malonyl-CoA + H(+) = a very-long-chain 3-oxoacyl-CoA + CO2 + CoA. It functions in the pathway lipid metabolism; fatty acid biosynthesis. Functionally, involved in the elongation of C22 to C24 fatty acids, which are precursors for the biosynthesis of cuticular waxes, aliphatic suberins, and membrane lipids, including sphingolipids and phospholipids. This chain is 3-ketoacyl-CoA synthase 9, found in Arabidopsis thaliana (Mouse-ear cress).